We begin with the raw amino-acid sequence, 355 residues long: Probable dual-specificity RNA methyltransferase RlmN (355 aa).

Residue Glu92 is the Proton acceptor of the active site. The Radical SAM core domain maps to 98-330 (FHYGLSVCVT…TELGINCGVR (233 aa)). Cys105 and Cys341 form a disulfide bridge. Cys112, Cys116, and Cys119 together coordinate [4Fe-4S] cluster. S-adenosyl-L-methionine is bound by residues 164–165 (GE), Ser196, 219–221 (SLH), and Asn297. The active-site S-methylcysteine intermediate is Cys341.

Belongs to the radical SAM superfamily. RlmN family. It depends on [4Fe-4S] cluster as a cofactor.

The protein localises to the cytoplasm. The catalysed reaction is adenosine(2503) in 23S rRNA + 2 reduced [2Fe-2S]-[ferredoxin] + 2 S-adenosyl-L-methionine = 2-methyladenosine(2503) in 23S rRNA + 5'-deoxyadenosine + L-methionine + 2 oxidized [2Fe-2S]-[ferredoxin] + S-adenosyl-L-homocysteine. It carries out the reaction adenosine(37) in tRNA + 2 reduced [2Fe-2S]-[ferredoxin] + 2 S-adenosyl-L-methionine = 2-methyladenosine(37) in tRNA + 5'-deoxyadenosine + L-methionine + 2 oxidized [2Fe-2S]-[ferredoxin] + S-adenosyl-L-homocysteine. Functionally, specifically methylates position 2 of adenine 2503 in 23S rRNA and position 2 of adenine 37 in tRNAs. The protein is Probable dual-specificity RNA methyltransferase RlmN of Oceanobacillus iheyensis (strain DSM 14371 / CIP 107618 / JCM 11309 / KCTC 3954 / HTE831).